The sequence spans 214 residues: uncharacterized protein (214 aa).

URF2 product may be involved in the transfer of iron-sulfur clusters to the NADH dehydrogenase complex. It may also be required for the assembly of the NADH dehydrogenase complex. This is an uncharacterized protein from Paracoccus denitrificans.